A 636-amino-acid chain; its full sequence is 1-deoxy-D-xylulose-5-phosphate synthase (636 aa).

Thiamine diphosphate-binding positions include His74 and 115-117; that span reads GHS. Asp146 lines the Mg(2+) pocket. Thiamine diphosphate-binding positions include 147 to 148, Asn175, Tyr286, and Glu367; that span reads GA. Mg(2+) is bound at residue Asn175.

Belongs to the transketolase family. DXPS subfamily. In terms of assembly, homodimer. Mg(2+) is required as a cofactor. It depends on thiamine diphosphate as a cofactor.

It catalyses the reaction D-glyceraldehyde 3-phosphate + pyruvate + H(+) = 1-deoxy-D-xylulose 5-phosphate + CO2. It functions in the pathway metabolic intermediate biosynthesis; 1-deoxy-D-xylulose 5-phosphate biosynthesis; 1-deoxy-D-xylulose 5-phosphate from D-glyceraldehyde 3-phosphate and pyruvate: step 1/1. Functionally, catalyzes the acyloin condensation reaction between C atoms 2 and 3 of pyruvate and glyceraldehyde 3-phosphate to yield 1-deoxy-D-xylulose-5-phosphate (DXP). This is 1-deoxy-D-xylulose-5-phosphate synthase from Halothermothrix orenii (strain H 168 / OCM 544 / DSM 9562).